A 316-amino-acid polypeptide reads, in one-letter code: Putative S-adenosyl-L-methionine-dependent methyltransferase MAB_4606c (316 aa).

Residues aspartate 137 and 166 to 167 (DL) contribute to the S-adenosyl-L-methionine site.

The protein belongs to the UPF0677 family.

Exhibits S-adenosyl-L-methionine-dependent methyltransferase activity. The polypeptide is Putative S-adenosyl-L-methionine-dependent methyltransferase MAB_4606c (Mycobacteroides abscessus (strain ATCC 19977 / DSM 44196 / CCUG 20993 / CIP 104536 / JCM 13569 / NCTC 13031 / TMC 1543 / L948) (Mycobacterium abscessus)).